The sequence spans 276 residues: Ribosomal RNA small subunit methyltransferase A (276 aa).

Residues asparagine 15, leucine 17, glycine 42, glutamate 63, aspartate 88, and asparagine 111 each coordinate S-adenosyl-L-methionine.

It belongs to the class I-like SAM-binding methyltransferase superfamily. rRNA adenine N(6)-methyltransferase family. RsmA subfamily.

Its subcellular location is the cytoplasm. It catalyses the reaction adenosine(1518)/adenosine(1519) in 16S rRNA + 4 S-adenosyl-L-methionine = N(6)-dimethyladenosine(1518)/N(6)-dimethyladenosine(1519) in 16S rRNA + 4 S-adenosyl-L-homocysteine + 4 H(+). In terms of biological role, specifically dimethylates two adjacent adenosines (A1518 and A1519) in the loop of a conserved hairpin near the 3'-end of 16S rRNA in the 30S particle. May play a critical role in biogenesis of 30S subunits. The sequence is that of Ribosomal RNA small subunit methyltransferase A from Geobacter sulfurreducens (strain ATCC 51573 / DSM 12127 / PCA).